The primary structure comprises 311 residues: Aspartate carbamoyltransferase catalytic subunit (311 aa).

Arg55 and Thr56 together coordinate carbamoyl phosphate. Lys85 provides a ligand contact to L-aspartate. Positions 106, 135, and 138 each coordinate carbamoyl phosphate. Residues Arg168 and Arg230 each coordinate L-aspartate. Carbamoyl phosphate is bound by residues Leu268 and Pro269.

It belongs to the aspartate/ornithine carbamoyltransferase superfamily. ATCase family. In terms of assembly, heterododecamer (2C3:3R2) of six catalytic PyrB chains organized as two trimers (C3), and six regulatory PyrI chains organized as three dimers (R2).

The enzyme catalyses carbamoyl phosphate + L-aspartate = N-carbamoyl-L-aspartate + phosphate + H(+). The protein operates within pyrimidine metabolism; UMP biosynthesis via de novo pathway; (S)-dihydroorotate from bicarbonate: step 2/3. Functionally, catalyzes the condensation of carbamoyl phosphate and aspartate to form carbamoyl aspartate and inorganic phosphate, the committed step in the de novo pyrimidine nucleotide biosynthesis pathway. The sequence is that of Aspartate carbamoyltransferase catalytic subunit from Proteus mirabilis (strain HI4320).